A 248-amino-acid polypeptide reads, in one-letter code: Ureidoacrylate amidohydrolase RutB (248 aa).

Residue aspartate 41 is the Proton acceptor of the active site. Lysine 150 is a catalytic residue. Catalysis depends on cysteine 183, which acts as the Nucleophile.

It belongs to the isochorismatase family. RutB subfamily.

It catalyses the reaction (Z)-3-ureidoacrylate + H2O + H(+) = (Z)-3-aminoacrylate + NH4(+) + CO2. The catalysed reaction is (Z)-3-ureidoacrylate + H2O = (Z)-3-aminoacrylate + carbamate + H(+). The enzyme catalyses (Z)-2-methylureidoacrylate + H2O + H(+) = (Z)-2-methylaminoacrylate + NH4(+) + CO2. In terms of biological role, hydrolyzes ureidoacrylate to form aminoacrylate and carbamate. The carbamate hydrolyzes spontaneously, thereby releasing one of the nitrogen atoms of the pyrimidine ring as ammonia and one of its carbon atoms as CO2. This Stutzerimonas stutzeri (strain A1501) (Pseudomonas stutzeri) protein is Ureidoacrylate amidohydrolase RutB.